Here is a 170-residue protein sequence, read N- to C-terminus: Adenine phosphoribosyltransferase (170 aa).

The protein belongs to the purine/pyrimidine phosphoribosyltransferase family. In terms of assembly, homodimer.

It is found in the cytoplasm. It carries out the reaction AMP + diphosphate = 5-phospho-alpha-D-ribose 1-diphosphate + adenine. It functions in the pathway purine metabolism; AMP biosynthesis via salvage pathway; AMP from adenine: step 1/1. Catalyzes a salvage reaction resulting in the formation of AMP, that is energically less costly than de novo synthesis. This Maridesulfovibrio salexigens (strain ATCC 14822 / DSM 2638 / NCIMB 8403 / VKM B-1763) (Desulfovibrio salexigens) protein is Adenine phosphoribosyltransferase.